Reading from the N-terminus, the 79-residue chain is Acyl carrier protein (79 aa).

Positions 4-79 (EQILVDVQEA…DVVAYIETKL (76 aa)) constitute a Carrier domain. Serine 39 carries the O-(pantetheine 4'-phosphoryl)serine modification.

This sequence belongs to the acyl carrier protein (ACP) family. In terms of processing, 4'-phosphopantetheine is transferred from CoA to a specific serine of apo-ACP by AcpS. This modification is essential for activity because fatty acids are bound in thioester linkage to the sulfhydryl of the prosthetic group.

It is found in the cytoplasm. It functions in the pathway lipid metabolism; fatty acid biosynthesis. In terms of biological role, carrier of the growing fatty acid chain in fatty acid biosynthesis. The polypeptide is Acyl carrier protein (Exiguobacterium sp. (strain ATCC BAA-1283 / AT1b)).